A 116-amino-acid chain; its full sequence is Prefoldin subunit beta (116 aa).

Belongs to the prefoldin subunit beta family. As to quaternary structure, heterohexamer of two alpha and four beta subunits.

It localises to the cytoplasm. In terms of biological role, molecular chaperone capable of stabilizing a range of proteins. Seems to fulfill an ATP-independent, HSP70-like function in archaeal de novo protein folding. In Archaeoglobus fulgidus (strain ATCC 49558 / DSM 4304 / JCM 9628 / NBRC 100126 / VC-16), this protein is Prefoldin subunit beta (pfdB).